We begin with the raw amino-acid sequence, 355 residues long: Histidinol-phosphate aminotransferase 2 (355 aa).

At Lys213 the chain carries N6-(pyridoxal phosphate)lysine.

This sequence belongs to the class-II pyridoxal-phosphate-dependent aminotransferase family. Histidinol-phosphate aminotransferase subfamily. In terms of assembly, homodimer. Requires pyridoxal 5'-phosphate as cofactor.

It catalyses the reaction L-histidinol phosphate + 2-oxoglutarate = 3-(imidazol-4-yl)-2-oxopropyl phosphate + L-glutamate. It participates in amino-acid biosynthesis; L-histidine biosynthesis; L-histidine from 5-phospho-alpha-D-ribose 1-diphosphate: step 7/9. The sequence is that of Histidinol-phosphate aminotransferase 2 from Burkholderia lata (strain ATCC 17760 / DSM 23089 / LMG 22485 / NCIMB 9086 / R18194 / 383).